A 1406-amino-acid polypeptide reads, in one-letter code: DNA topoisomerase 2 (1406 aa).

ATP-binding positions include N69, N98, 126–128 (SSN), and 139–146 (GRNGYGAK). The segment at 332–334 (KKK) is interaction with DNA. An ATP-binding site is contributed by 363 to 365 (QTK). In terms of domain architecture, Toprim spans 441 to 555 (CTLILTEGDS…GLLDIPGFLI (115 aa)). Positions 447, 524, and 526 each coordinate Mg(2+). One can recognise a Topo IIA-type catalytic domain in the interval 690 to 1159 (IPSVLDGFKP…SAKDLWNNDL (470 aa)). Y780 serves as the catalytic O-(5'-phospho-DNA)-tyrosine intermediate. The segment at 963–972 (KLISPISLQN) is interaction with DNA. A compositionally biased stretch (acidic residues) spans 1079-1089 (EDEDEDLEESE). 4 disordered regions span residues 1079–1106 (EDED…VNGP), 1183–1215 (KTKG…KKIK), 1230–1287 (KIKA…DESG), and 1303–1406 (DEDA…FNDE). The span at 1090-1100 (EATRKKDKDDE) shows a compositional bias: basic and acidic residues. Positions 1204–1214 (KKKPARRIKKI) are enriched in basic residues. The segment covering 1261–1274 (DVTSNASTPSTTIF) has biased composition (polar residues). Residues 1326-1336 (AKKKAPPKRKA) are compositionally biased toward basic residues. Composition is skewed to acidic residues over residues 1341-1359 (SSED…DEEV) and 1381-1406 (EISD…FNDE).

It belongs to the type II topoisomerase family. In terms of assembly, homodimer. It depends on Mg(2+) as a cofactor. Mn(2+) is required as a cofactor. Ca(2+) serves as cofactor.

The protein resides in the nucleus. It catalyses the reaction ATP-dependent breakage, passage and rejoining of double-stranded DNA.. Control of topological states of DNA by transient breakage and subsequent rejoining of DNA strands. Topoisomerase II makes double-strand breaks. The sequence is that of DNA topoisomerase 2 (TOP2) from Candida glabrata (strain ATCC 2001 / BCRC 20586 / JCM 3761 / NBRC 0622 / NRRL Y-65 / CBS 138) (Yeast).